Reading from the N-terminus, the 532-residue chain is T-complex protein 1 subunit epsilon (532 aa).

The protein belongs to the TCP-1 chaperonin family. Component of the T-complex protein 1 (TCP1) complex.

Its subcellular location is the cytoplasm. Molecular chaperone; assists the folding of proteins upon ATP hydrolysis. This Encephalitozoon cuniculi (strain GB-M1) (Microsporidian parasite) protein is T-complex protein 1 subunit epsilon (CCT5).